Consider the following 111-residue polypeptide: Anti-adapter protein IraM (111 aa).

This sequence belongs to the IraM/RssC family.

It is found in the cytoplasm. Its function is as follows. Inhibits RpoS proteolysis by regulating RssB activity, thereby increasing the stability of the sigma stress factor RpoS during magnesium starvation. The chain is Anti-adapter protein IraM from Escherichia coli O127:H6 (strain E2348/69 / EPEC).